A 409-amino-acid chain; its full sequence is MKYVKVQIINKSTIELLEDAKKGEKINLDLINQVDQTNILNTITTNQKLAWEKELSAQFINQQNELIKNFEIEIIKLKTMLNDKEQALLLKTKLELQNQFQKQIENYINEINKLKLTNKELEITNQKQLESSLKLQRNEFEEKINQQNLTIEKLKIQQARSSIWAVAKKGNELEKWCENQYESYADSFENCQFTRYKTEINLLDENDFPNEKADYIFSFFGEKTNKIPFLSICCEMKSEFNDSKHKSKNKDHISKLVRDAKRANCKYAFLISELELETENDIQVRLMPTLESGVEVYLVRPMFFILMLKLFYKLAKKLFALNRFQSVELIDKNKLNEQFKQLKDNFLTKTFLEIEKVCKSNLVDIETLEKAVVKLRVRNERVLDQLLNKWTKKIDSFDLQLTKKITNNY.

This is an uncharacterized protein from Mycoplasma genitalium (strain ATCC 33530 / DSM 19775 / NCTC 10195 / G37) (Mycoplasmoides genitalium).